The primary structure comprises 154 residues: Snaclec EMS16 subunit beta (154 aa).

An N-terminal signal peptide occupies residues 1–26; sequence MGRLISVRFSLLVVFLSLSGIGAGLC. An intrachain disulfide couples C27 to C38. Residues 34–147 enclose the C-type lectin domain; that stretch reads FDQHCYKVFE…CEKSVSFVCK (114 aa). A glycan (N-linked (GlcNAc...) asparagine) is linked at N47. 2 cysteine pairs are disulfide-bonded: C55-C146 and C121-C138.

It belongs to the snaclec family. Heterodimer of subunits A and B; disulfide-linked. In terms of tissue distribution, expressed by the venom gland.

The protein resides in the secreted. Its function is as follows. EMS16 is a potent and selective inhibitor of alpha-2/beta-1 (ITGA2/ITGB1) integrin and acts as a potent antagonist of platelet aggregation and cell migration. Binds specifically to the I domain of the alpha-2 subunit, in a metal ion-independent fashion. The chain is Snaclec EMS16 subunit beta from Echis multisquamatus (Central Asian sand viper).